Reading from the N-terminus, the 253-residue chain is Probable transcriptional regulatory protein Synpcc7942_1017 (253 aa).

Belongs to the TACO1 family.

It localises to the cytoplasm. The protein is Probable transcriptional regulatory protein Synpcc7942_1017 of Synechococcus elongatus (strain ATCC 33912 / PCC 7942 / FACHB-805) (Anacystis nidulans R2).